The chain runs to 594 residues: Potassium-transporting ATPase potassium-binding subunit (594 aa).

Transmembrane regions (helical) follow at residues 4 to 24 (QFFG…PFLG), 65 to 85 (QYAV…YALQ), 136 to 156 (ALTV…FALI), 179 to 199 (LYVL…QGVI), 287 to 307 (LEML…GEMV), 314 to 334 (VAIL…TQNA), 361 to 381 (FGVA…CGAV), 390 to 410 (AMGG…FGGV), 413 to 433 (GLYG…LMIG), 450 to 470 (MVSI…ALAV), 518 to 538 (LLGL…LALA), and 560 to 580 (LFIV…YVPA).

This sequence belongs to the KdpA family. The system is composed of three essential subunits: KdpA, KdpB and KdpC.

Its subcellular location is the cell inner membrane. Functionally, part of the high-affinity ATP-driven potassium transport (or Kdp) system, which catalyzes the hydrolysis of ATP coupled with the electrogenic transport of potassium into the cytoplasm. This subunit binds the periplasmic potassium ions and delivers the ions to the membrane domain of KdpB through an intramembrane tunnel. This chain is Potassium-transporting ATPase potassium-binding subunit, found in Bordetella avium (strain 197N).